A 483-amino-acid polypeptide reads, in one-letter code: Altronate oxidoreductase (483 aa).

Residue 18 to 29 (IIQFGEGNFLRA) participates in NAD(+) binding.

The protein belongs to the mannitol dehydrogenase family. UxaB subfamily.

It catalyses the reaction D-altronate + NAD(+) = keto-D-tagaturonate + NADH + H(+). The protein operates within carbohydrate metabolism; pentose and glucuronate interconversion. The protein is Altronate oxidoreductase of Escherichia coli O7:K1 (strain IAI39 / ExPEC).